We begin with the raw amino-acid sequence, 245 residues long: Probable phosphatase Spro_1934 (245 aa).

Zn(2+)-binding residues include His7, His9, His15, His40, Glu73, His101, His131, Asp192, and His194.

This sequence belongs to the PHP family. In terms of assembly, homotrimer. It depends on Zn(2+) as a cofactor.

This Serratia proteamaculans (strain 568) protein is Probable phosphatase Spro_1934.